The following is a 141-amino-acid chain: Protein MGF 100-2L (141 aa).

The protein belongs to the asfivirus MGF 100 family.

In terms of biological role, plays a role in virus cell tropism, and may be required for efficient virus replication in macrophages. The sequence is that of Protein MGF 100-2L from African swine fever virus (isolate Tick/South Africa/Pretoriuskop Pr4/1996) (ASFV).